Consider the following 91-residue polypeptide: Transcription factor ILI3 (91 aa).

The bHLH domain occupies 3 to 58 (SRRGGGGGGGRITDEEINELISKLQALLPESSRSRGASRSSASKLLKETCSYIKSL).

It belongs to the bHLH protein family.

Atypical and probable non DNA-binding bHLH transcription that integrates multiple signaling pathways to regulate cell elongation and plant development. This is Transcription factor ILI3 (ILI3) from Oryza sativa subsp. indica (Rice).